We begin with the raw amino-acid sequence, 436 residues long: Serine carboxypeptidase-like 15 (436 aa).

The signal sequence occupies residues Met1–Ser24. 3 cysteine pairs are disulfide-bonded: Cys83/Cys326, Cys247/Cys261, and Cys285/Cys292. Residue Asn104 is glycosylated (N-linked (GlcNAc...) asparagine). Residue Ser179 is part of the active site. N-linked (GlcNAc...) asparagine glycans are attached at residues Asn306 and Asn345. Asp361 is a catalytic residue. N-linked (GlcNAc...) asparagine glycosylation is present at Asn377. His414 is an active-site residue.

The protein belongs to the peptidase S10 family. As to expression, expressed in seedlings and roots.

It localises to the secreted. In terms of biological role, probable carboxypeptidase. The chain is Serine carboxypeptidase-like 15 (SCPL15) from Arabidopsis thaliana (Mouse-ear cress).